Reading from the N-terminus, the 340-residue chain is Lipoate--protein ligase 2 (340 aa).

Residues 31-222 (FLDEDILFPY…QILGIDDIKE (192 aa)) enclose the BPL/LPL catalytic domain. ATP is bound by residues Arg-73, 78–81 (GAVY), Lys-136, and Ala-140. Lys-136 is a binding site for (R)-lipoate. The stretch at 293–321 (QGDIKDVEEALQGTKMTREDLMHQLKQLD) forms a coiled coil.

The protein belongs to the LplA family.

It catalyses the reaction L-lysyl-[lipoyl-carrier protein] + (R)-lipoate + ATP = N(6)-[(R)-lipoyl]-L-lysyl-[lipoyl-carrier protein] + AMP + diphosphate + H(+). It functions in the pathway protein modification; protein lipoylation via exogenous pathway; protein N(6)-(lipoyl)lysine from lipoate: step 1/2. Its pathway is protein modification; protein lipoylation via exogenous pathway; protein N(6)-(lipoyl)lysine from lipoate: step 2/2. Catalyzes specifically the lipoylation of GcvH-L (SAV0324), likely via the ATP-dependent activation of lipoate to lipoyl-AMP and the transfer of the activated lipoyl onto the lipoyl domain of the target protein. Can also utilize lipoamide as substrate for GcvH-L modification. The polypeptide is Lipoate--protein ligase 2 (Staphylococcus aureus (strain Mu50 / ATCC 700699)).